The following is a 302-amino-acid chain: RNA polymerase sigma factor RpoH (302 aa).

A sigma-70 factor domain-2 region spans residues L57 to S126. The short motif at E81–S84 is the Interaction with polymerase core subunit RpoC element. The sigma-70 factor domain-4 stretch occupies residues A235–K286. The H-T-H motif DNA-binding region spans L259 to V278.

Belongs to the sigma-70 factor family. RpoH subfamily. As to quaternary structure, interacts with the RNA polymerase core enzyme.

It is found in the cytoplasm. Sigma factors are initiation factors that promote the attachment of RNA polymerase to specific initiation sites and are then released. This sigma factor is involved in regulation of expression of heat shock genes. In Zymomonas mobilis subsp. mobilis (strain ATCC 31821 / ZM4 / CP4), this protein is RNA polymerase sigma factor RpoH.